Reading from the N-terminus, the 305-residue chain is Achromobactin-binding periplasmic protein (305 aa).

An N-terminal signal peptide occupies residues 1-29 (MNEYLVSRRRLLRLSLSLLPLGLGRPALA). The Fe/B12 periplasmic-binding domain maps to 37-302 (RVITLFQGAT…DIARVTGIAG (266 aa)).

Belongs to the bacterial solute-binding protein 8 family.

The protein resides in the periplasm. Functionally, binds citrate- or chloride-dependent Fe(3+); part of the binding-protein-dependent transport system CbrABCD for uptake of the siderophore achromobactin. The chain is Achromobactin-binding periplasmic protein (cbrA) from Dickeya dadantii (strain 3937) (Erwinia chrysanthemi (strain 3937)).